The sequence spans 109 residues: MKPYSTLFLFTLLTLTTVPAQADIIDDTIGNIQQAINDAYNPDHGRDYEDSRDDGWQREVSDDRRRQYDDRRRQFEDRRRQLDDRQHQLDQERRQLEDEERRMEDEYGQ.

A signal peptide spans Met1–Ala22. The interval Ala39–Gln109 is disordered. Basic and acidic residues predominate over residues Asn41–Gln109.

This is an uncharacterized protein from Shigella dysenteriae serotype 1 (strain Sd197).